The chain runs to 62 residues: MKNTILILFTAFIALLGFFGMSAEADPIADPIADPISGPNAEADPEAINLKAIAALAKKLFG.

Positions 1–25 are cleaved as a signal peptide; that stretch reads MKNTILILFTAFIALLGFFGMSAEA. AXPX repeat units follow at residues 25–28, 29–32, 33–36, and 43–46; these read ADPI and ADPE. Residues 26–47 constitute a propeptide that is removed on maturation; sequence DPIADPIADPISGPNAEADPEA. At Phe-61 the chain carries Phenylalanine amide.

It belongs to the MCD family. Mastoparan subfamily. As to expression, expressed by the venom gland.

The protein resides in the secreted. The protein localises to the target cell membrane. Antimicrobial and mast cell degranulating peptide. Has broad spectrum antibacterial activity against both Gram-positive and Gram-negative bacteria (S.aureus MIC=16-32 ug/ml, S.xylosus MIC=1.5 ug/ml, S.alactolyticus MIC=8 ug/ml, C.koseri MIC=4 ug/ml, E.coli MIC=4-32 ug/ml, K.pneumoniae MIC=32 ug/ml, P.aerugiosa MIC=96 ug/ml, S.choleraesuis MIC=16 ug/ml, S.typhimurium MIC=32 ug/ml, V.parahamelytics MIC=16 ug/ml). Is also active on multi-antibiotic resistant hemolytic E.coli O157:H7. Acts by affecting membrane permeability. On E.coli O157:H7, acts through multiple membrane disruption patterns, including large perforations (full opening) at apical ends (hollow tubes), vesicle budding, forming dents, and membrane corrugation and invagination leading to irregular pits or pores. Exerts 40% lower membrane permeabilization activities on E.coli O157:H7 than on the non-pathogen E.coli BL21. Shows little hemolytic activities on sheep, chicken and human erythrocytes, but with a higher activity on chicken erythrocytes. Its mast cell degranulation activity may be related to the activation of G-protein coupled receptors in mast cells as well as interaction with other proteins located in cell endosomal membranes in the mast cells. The chain is Mastoparan-AF from Vespa affinis (Lesser banded hornet).